A 317-amino-acid polypeptide reads, in one-letter code: Beta-ketoacyl-[acyl-carrier-protein] synthase III (317 aa).

Active-site residues include cysteine 112 and histidine 244. The tract at residues 245 to 249 (QANLR) is ACP-binding. Asparagine 274 is a catalytic residue.

This sequence belongs to the thiolase-like superfamily. FabH family. In terms of assembly, homodimer.

Its subcellular location is the cytoplasm. The enzyme catalyses malonyl-[ACP] + acetyl-CoA + H(+) = 3-oxobutanoyl-[ACP] + CO2 + CoA. It participates in lipid metabolism; fatty acid biosynthesis. Catalyzes the condensation reaction of fatty acid synthesis by the addition to an acyl acceptor of two carbons from malonyl-ACP. Catalyzes the first condensation reaction which initiates fatty acid synthesis and may therefore play a role in governing the total rate of fatty acid production. Possesses both acetoacetyl-ACP synthase and acetyl transacylase activities. Its substrate specificity determines the biosynthesis of branched-chain and/or straight-chain of fatty acids. This is Beta-ketoacyl-[acyl-carrier-protein] synthase III from Sodalis glossinidius (strain morsitans).